Reading from the N-terminus, the 419-residue chain is Serine/threonine-protein kinase Kist (419 aa).

Residues 23–303 (WQVQSRLGSG…PAEMALCSPF (281 aa)) form the Protein kinase domain. Residues 29 to 37 (LGSGSSASV) and K54 contribute to the ATP site. D158 serves as the catalytic Proton acceptor. An RRM domain is found at 323–405 (LRLLNVLDDD…GKFVVATFYP (83 aa)).

It belongs to the protein kinase superfamily. Ser/Thr protein kinase family. In terms of assembly, interacts with PAM and CDKN1B/p27Kip1. Interacts with stathmin.

Its subcellular location is the nucleus. It catalyses the reaction L-seryl-[protein] + ATP = O-phospho-L-seryl-[protein] + ADP + H(+). The catalysed reaction is L-threonyl-[protein] + ATP = O-phospho-L-threonyl-[protein] + ADP + H(+). In terms of biological role, upon serum stimulation, phosphorylates CDKN1B/p27Kip1, thus controlling CDKN1B subcellular location and cell cycle progression in G1 phase. May be involved in trafficking and/or processing of RNA. The protein is Serine/threonine-protein kinase Kist (Uhmk1) of Mus musculus (Mouse).